We begin with the raw amino-acid sequence, 176 residues long: MFLIITRDTMFFTAMKNILSKGNVVHIQNEEEIDVMLHQNAFVIIDTLMNNVFHSNFLTQIERLKPVHVIIFSPFNIKRCLGKVPVTFVPRTITIIDFVALINGSYCSVPEANVSLSRKQHQVLSCIANQMTTEDILEKLKISLKTFYCHKHNIMMILNLKRINELVRHQHIDYLV.

Positions V109 to Y174 constitute an HTH luxR-type domain. The H-T-H motif DNA-binding region spans T133–H152.

In terms of biological role, may act as a transcriptional regulator of dctA. Could be involved in the regulation of the genes coding for the type III secretion system in enterohaemorragic strains. The chain is HTH-type transcriptional regulator DctR (dctR) from Escherichia coli O157:H7.